The primary structure comprises 379 residues: Nucleosome assembly protein 1;2 (379 aa).

A coiled-coil region spans residues 26 to 80 (VNALKNKLQNLAGQHSDVLENLTPPVRKRVEFLREIQNQYDEMEAKFFEERAALE). Residue serine 41 is modified to Phosphoserine. Residues 47–62 (LTPPVRKRVEFLREIQ) carry the Nuclear export signal motif. The Nuclear localization signal motif lies at 222–227 (KKKPKK). The disordered stretch occupies residues 298-379 (AVEADDLDIE…GERPPECKQQ (82 aa)). Over residues 299 to 342 (VEADDLDIEDDDDEIDEDDDEEDEEDDEDDEEEDDEDDDEEEEA) the composition is skewed to acidic residues. The span at 347 to 360 (KSKKKSSAGHKKAG) shows a compositional bias: basic residues. Position 376 is a cysteine methyl ester (cysteine 376). Cysteine 376 is lipidated: S-farnesyl cysteine. A propeptide spans 377–379 (KQQ) (removed in mature form).

This sequence belongs to the nucleosome assembly protein (NAP) family. In terms of assembly, can form homomeric and heteromeric protein complexes with NAP1;1, NAP1;3 and NAP1;4. Binds histone H2A. As to expression, ubiquitous.

Its subcellular location is the nucleus. It is found in the cytoplasm. Its function is as follows. May modulate chromatin structure by regulation of nucleosome assembly/disassembly. May function in nucleotide excision repair (NER). Involved in somatic homologous recombination. This is Nucleosome assembly protein 1;2 (NAP1;2) from Arabidopsis thaliana (Mouse-ear cress).